Consider the following 1323-residue polypeptide: Traf2 and NCK-interacting protein kinase (1323 aa).

The region spanning 25 to 289 (FELVELVGNG…TEQLMKHPFI (265 aa)) is the Protein kinase domain. Residues 31–39 (VGNGTYGQV) and Lys54 contribute to the ATP site. The Proton acceptor role is filled by Asp153. The residue at position 187 (Thr187) is a Phosphothreonine. 3 disordered regions span residues 284–347 (MKHP…LPGE), 397–559 (EQKE…LRPV), and 571–838 (SQGP…NEQY). A compositionally biased stretch (basic and acidic residues) spans 288–307 (FIRDQPNERQVRIQLKDHID). The mediates interaction with NEDD4 stretch occupies residues 290-1010 (RDQPNERQVR…EIRKYKKRFN (721 aa)). A compositionally biased stretch (acidic residues) spans 317–335 (DETEYEYSGSEEEEEENDS). Phosphoserine occurs at positions 324 and 326. Basic and acidic residues-rich tracts occupy residues 397–470 (EQKE…ERDY), 477–494 (QRQE…HYKE), and 503–513 (AWAKEVEERSR). 2 positions are modified to phosphoserine: Ser531 and Ser541. Thr552 is subject to Phosphothreonine. 4 positions are modified to phosphoserine: Ser571, Ser579, Ser581, and Ser611. The segment covering 623-640 (RIEKFDRSSWLRQEEDIP) has biased composition (basic and acidic residues). Phosphoserine is present on residues Ser649, Ser651, Ser659, Ser672, Ser678, Ser691, Ser735, Ser737, and Ser740. Positions 691–726 (SSLQRTSSGSSSSSSTPSSQPSSQGGSQPGSQAGSS) are enriched in low complexity. Composition is skewed to basic and acidic residues over residues 746 to 760 (EPSK…DITR) and 772 to 790 (KELR…KKVT). The span at 797–810 (EESESSEEEEEDGE) shows a compositional bias: acidic residues. The residue at position 922 (Ser922) is a Phosphoserine. The interval 939–960 (FVDPRVYQTSPTDEDEEDDESS) is disordered. A compositionally biased stretch (acidic residues) spans 950–959 (TDEDEEDDES). Positions 1010-1297 (NSEILCAALW…KFLCERNDKV (288 aa)) constitute a CNH domain.

It belongs to the protein kinase superfamily. STE Ser/Thr protein kinase family. STE20 subfamily. Interacts (via the CNH domain) with RAP2A (GTP-bound form preferentially); the interaction is direct and required for the activation of TNIK by RAP2A. Interacts with NEDD4; recruits RAP2A to NEDD4. Interacts with TRAF2 and NCK. Interacts with TCF7L2/TCF4 and CTNNB1; the interaction is direct. Interacts with TANC1. Post-translationally, autophosphorylated. Autophosphorylation is activated by RAP2A and induces association to the cytoskeletal fraction.

The protein localises to the nucleus. It is found in the cytoplasm. It localises to the recycling endosome. Its subcellular location is the cytoskeleton. The enzyme catalyses L-seryl-[protein] + ATP = O-phospho-L-seryl-[protein] + ADP + H(+). It catalyses the reaction L-threonyl-[protein] + ATP = O-phospho-L-threonyl-[protein] + ADP + H(+). Its function is as follows. Serine/threonine kinase that acts as an essential activator of the Wnt signaling pathway. Recruited to promoters of Wnt target genes and required to activate their expression. May act by phosphorylating TCF4/TCF7L2. Appears to act upstream of the JUN N-terminal pathway. May play a role in the response to environmental stress. Part of a signaling complex composed of NEDD4, RAP2A and TNIK which regulates neuronal dendrite extension and arborization during development. More generally, it may play a role in cytoskeletal rearrangements and regulate cell spreading. Phosphorylates SMAD1 on Thr-322. Activator of the Hippo signaling pathway which plays a pivotal role in organ size control and tumor suppression by restricting proliferation and promoting apoptosis. MAP4Ks act in parallel to and are partially redundant with STK3/MST2 and STK4/MST2 in the phosphorylation and activation of LATS1/2, and establish MAP4Ks as components of the expanded Hippo pathway. The sequence is that of Traf2 and NCK-interacting protein kinase (Tnik) from Mus musculus (Mouse).